We begin with the raw amino-acid sequence, 290 residues long: UPF0761 membrane protein CKO_03126 (290 aa).

The next 6 membrane-spanning stretches (helical) occupy residues 44–64, 104–124, 140–160, 183–203, 210–230, and 244–264; these read LLSLVPLIAVVFALFAAFPMF, VGACGLIVTALLLMYAIDSAL, FAVYWMILTLGPLLAGASLAI, VFPLILSWISFWLLYSIVPTT, AVVGAFVAAVLFEAGKKGFAL, and VLAVIPILFVWVYWTWCIVLL.

It belongs to the UPF0761 family.

Its subcellular location is the cell inner membrane. The sequence is that of UPF0761 membrane protein CKO_03126 from Citrobacter koseri (strain ATCC BAA-895 / CDC 4225-83 / SGSC4696).